Reading from the N-terminus, the 953-residue chain is Translation initiation factor IF-2 (953 aa).

The segment at 53–368 (AKKAVAGTSE…PVTERKFHEL (316 aa)) is disordered. 2 stretches are compositionally biased toward basic and acidic residues: residues 135 to 151 (FKAE…ERRK) and 162 to 190 (RNDR…RNRQ). A compositionally biased stretch (low complexity) spans 191–214 (EQGNQHRNQGQSQYNQQRQSFNQG). A compositionally biased stretch (basic and acidic residues) spans 236 to 266 (RSSEERFKQAKANKEALREQNKRKEQAKLED). Low complexity predominate over residues 274–288 (PKPTAKAPATPAPTA). Positions 301-318 (ARPDKERDNFDHEEDGPR) are enriched in basic and acidic residues. Over residues 332–341 (NQKNSNWNNN) the composition is skewed to low complexity. The tr-type G domain maps to 455-622 (ERPPVVTIMG…TVLLVAEIQE (168 aa)). The interval 464–471 (GHVDHGKT) is G1. Position 464–471 (464–471 (GHVDHGKT)) interacts with GTP. The interval 489–493 (GITQH) is G2. Residues 510–513 (DTPG) form a G3 region. Residues 510-514 (DTPGH) and 564-567 (NKID) contribute to the GTP site. Residues 564 to 567 (NKID) form a G4 region. A G5 region spans residues 600–602 (SAK).

The protein belongs to the TRAFAC class translation factor GTPase superfamily. Classic translation factor GTPase family. IF-2 subfamily.

The protein localises to the cytoplasm. One of the essential components for the initiation of protein synthesis. Protects formylmethionyl-tRNA from spontaneous hydrolysis and promotes its binding to the 30S ribosomal subunits. Also involved in the hydrolysis of GTP during the formation of the 70S ribosomal complex. This chain is Translation initiation factor IF-2, found in Streptococcus gordonii (strain Challis / ATCC 35105 / BCRC 15272 / CH1 / DL1 / V288).